Reading from the N-terminus, the 707-residue chain is Elongation factor G (707 aa).

Positions 8-288 constitute a tr-type G domain; that stretch reads QFTRNIGIMA…AVCKFLPSPA (281 aa). GTP is bound by residues 17–24, 85–89, and 139–142; these read AHIDAGKT, DTPGH, and NKMD. Positions 288 to 308 are disordered; that stretch reads ADTPTVEGTDPSDPNKVIERK.

Belongs to the TRAFAC class translation factor GTPase superfamily. Classic translation factor GTPase family. EF-G/EF-2 subfamily.

The protein resides in the cytoplasm. Its function is as follows. Catalyzes the GTP-dependent ribosomal translocation step during translation elongation. During this step, the ribosome changes from the pre-translocational (PRE) to the post-translocational (POST) state as the newly formed A-site-bound peptidyl-tRNA and P-site-bound deacylated tRNA move to the P and E sites, respectively. Catalyzes the coordinated movement of the two tRNA molecules, the mRNA and conformational changes in the ribosome. In Porphyromonas gingivalis (strain ATCC 33277 / DSM 20709 / CIP 103683 / JCM 12257 / NCTC 11834 / 2561), this protein is Elongation factor G.